We begin with the raw amino-acid sequence, 204 residues long: Rho GDP-dissociation inhibitor 1 (204 aa).

Residues 1-36 form a disordered region; sequence MAEQEPTAEQLAQIAAENEEDEHSVNYKPPAQKSIQ. A2 bears the N-acetylalanine mark. A Phosphoserine modification is found at S34. K43 bears the N6-acetyllysine mark. At S47 the chain carries Phosphoserine. The tract at residues 66 to 83 is hydrophobic; that stretch reads NVPNVVVTRLTLVCSTAP. S101 carries the post-translational modification Phosphoserine; by PKA. K105 bears the N6-acetyllysine mark. Phosphoserine; by PKC is present on S115. Residue K127 is modified to N6-acetyllysine. Glycyl lysine isopeptide (Lys-Gly) (interchain with G-Cter in SUMO1); alternate cross-links involve residues K138 and K141. Glycyl lysine isopeptide (Lys-Gly) (interchain with G-Cter in SUMO2); alternate cross-links involve residues K138 and K141. The residue at position 141 (K141) is an N6-acetyllysine; alternate. At K141 the chain carries N6-succinyllysine; alternate. The residue at position 178 (K178) is an N6-acetyllysine.

It belongs to the Rho GDI family. As to quaternary structure, monomer. Interacts with FER. Interacts with PLXNB3. Forms a heterodimer with RAC1. Interacts with RHOA, the affinity is increased by three orders of magnitude when RHOA is prenylated. Interacts with PSMD10; the interaction increases ARHGDIA association with RHOA, leading to ARHGDIA-mediated inactivation of RHOA and ROCK and prolonged AKT activation. Interacts with KANK2; the interaction is direct and may regulate the interaction of ARHGDIA with RHOA, RAC1 and CDC42. Interacts with RHOC. Interacts with CDC42. Interacts with NGFR (via death domain); NGFR binding decreases the affinity for RHOA. Brain, lung, thymus, spleen, small intestine, and kidney, and weakly in heart and liver.

The protein resides in the cytoplasm. Functionally, controls Rho proteins homeostasis. Regulates the GDP/GTP exchange reaction of the Rho proteins by inhibiting the dissociation of GDP from them, and the subsequent binding of GTP to them. Retains Rho proteins such as CDC42, RAC1 and RHOA in an inactive cytosolic pool, regulating their stability and protecting them from degradation. Actively involved in the recycling and distribution of activated Rho GTPases in the cell, mediates extraction from membranes of both inactive and activated molecules due its exceptionally high affinity for prenylated forms. Through the modulation of Rho proteins, may play a role in cell motility regulation. In glioma cells, inhibits cell migration and invasion by mediating the signals of SEMA5A and PLXNB3 that lead to inactivation of RAC1. The polypeptide is Rho GDP-dissociation inhibitor 1 (ARHGDIA) (Bos taurus (Bovine)).